Consider the following 76-residue polypeptide: ATP synthase subunit 9, mitochondrial (76 aa).

2 consecutive transmembrane segments (helical) span residues 10–30 and 52–72; these read IGAGISTIGLLGAGIGIAIVF and ILGFALSEATGLFCLMISFLL.

This sequence belongs to the ATPase C chain family. As to quaternary structure, F-type ATPases have 2 components, CF(1) - the catalytic core - and CF(0) - the membrane proton channel. CF(1) has five subunits: alpha(3), beta(3), gamma(1), delta(1), epsilon(1). CF(0) has three main subunits: a, b and c.

It localises to the mitochondrion membrane. Its function is as follows. Mitochondrial membrane ATP synthase (F(1)F(0) ATP synthase or Complex V) produces ATP from ADP in the presence of a proton gradient across the membrane which is generated by electron transport complexes of the respiratory chain. F-type ATPases consist of two structural domains, F(1) - containing the extramembraneous catalytic core and F(0) - containing the membrane proton channel, linked together by a central stalk and a peripheral stalk. During catalysis, ATP synthesis in the catalytic domain of F(1) is coupled via a rotary mechanism of the central stalk subunits to proton translocation. Part of the complex F(0) domain. A homomeric c-ring of probably 10 subunits is part of the complex rotary element. This chain is ATP synthase subunit 9, mitochondrial (ATP9), found in Kluyveromyces lactis (strain ATCC 8585 / CBS 2359 / DSM 70799 / NBRC 1267 / NRRL Y-1140 / WM37) (Yeast).